A 33-amino-acid chain; its full sequence is Large ribosomal subunit protein uL24 (33 aa).

This sequence belongs to the universal ribosomal protein uL24 family. Component of the large ribosomal subunit.

Its subcellular location is the cytoplasm. Component of the large ribosomal subunit. The ribosome is a large ribonucleoprotein complex responsible for the synthesis of proteins in the cell. The protein is Large ribosomal subunit protein uL24 (rpl26) of Xenopus laevis (African clawed frog).